The chain runs to 242 residues: Large ribosomal subunit protein uL30y (242 aa).

The protein belongs to the universal ribosomal protein uL30 family.

The polypeptide is Large ribosomal subunit protein uL30y (RPL7B) (Arabidopsis thaliana (Mouse-ear cress)).